The sequence spans 658 residues: Translation factor GUF1, mitochondrial (658 aa).

The transit peptide at 1–40 (MRGCLQTVRWLTSAWQRPPSYPPLSRAAPCRFFNVSIPRN) directs the protein to the mitochondrion. The region spanning 60–240 (DRFRNFCIVA…TVVEQIPAPV (181 aa)) is the tr-type G domain. Residues 69-76 (AHVDHGKS), 133-137 (DTPGH), and 187-190 (NKVD) contribute to the GTP site.

Belongs to the TRAFAC class translation factor GTPase superfamily. Classic translation factor GTPase family. LepA subfamily.

It localises to the mitochondrion inner membrane. The enzyme catalyses GTP + H2O = GDP + phosphate + H(+). Its function is as follows. Promotes mitochondrial protein synthesis. May act as a fidelity factor of the translation reaction, by catalyzing a one-codon backward translocation of tRNAs on improperly translocated ribosomes. Binds to mitochondrial ribosomes in a GTP-dependent manner. The polypeptide is Translation factor GUF1, mitochondrial (Paracoccidioides brasiliensis (strain Pb03)).